Reading from the N-terminus, the 293-residue chain is Foldase protein PrsA 2 (293 aa).

The N-terminal stretch at 1–20 is a signal peptide; that stretch reads MKKKLILGLVMMMALFSLAA. A lipid anchor (N-palmitoyl cysteine) is attached at Cys21. Cys21 is lipidated: S-diacylglycerol cysteine. The region spanning 135 to 226 is the PpiC domain; that stretch reads QPDITVSHIL…YGYHIIQMDK (92 aa).

Belongs to the PrsA family.

The protein localises to the cell membrane. The enzyme catalyses [protein]-peptidylproline (omega=180) = [protein]-peptidylproline (omega=0). Plays a major role in protein secretion by helping the post-translocational extracellular folding of several secreted proteins. In Listeria monocytogenes serovar 1/2a (strain ATCC BAA-679 / EGD-e), this protein is Foldase protein PrsA 2 (prsA2).